The chain runs to 289 residues: Protease HtpX homolog (289 aa).

2 helical membrane passes run 5–27 and 40–60; these read LWVR…GYLI and ALFM…SWYN. Histidine 133 provides a ligand contact to Zn(2+). Glutamate 134 is a catalytic residue. Histidine 137 provides a ligand contact to Zn(2+). 2 consecutive transmembrane segments (helical) span residues 143–163 and 181–201; these read TLIQ…VNFA and IVAL…IQLA. Glutamate 207 is a Zn(2+) binding site.

It belongs to the peptidase M48B family. Requires Zn(2+) as cofactor.

Its subcellular location is the cell membrane. The polypeptide is Protease HtpX homolog (Pyrococcus furiosus (strain ATCC 43587 / DSM 3638 / JCM 8422 / Vc1)).